Reading from the N-terminus, the 262-residue chain is MSHPMSQSQPATVKHDTLFTTPLDKAARFSFDEQVVACFPDMIRRSVPGYGQVLAMLPIFARRHCKYRQQGDNGQRVSRIYDLGCSLGAASMTLAGEFESQDLQIKAIDISPAMTTEATTLLSDNYPEHDIEVITADIRDIEFEPCDMVILNLTLQFLPAADRVAVLEKIYAALSEGGILVLTEKTHAFDEQYDAWLVERYYDFKRANGYTEMEISGKRNALENVLITDTLDEHHTRLAQVGFQRHLTWFQFLNFVSIVAFK.

S-adenosyl-L-methionine is bound by residues Tyr-50, 84-86 (GCS), 137-138 (DI), Asn-152, and Arg-219.

It belongs to the class I-like SAM-binding methyltransferase superfamily. Cx-SAM synthase family. Homodimer.

The enzyme catalyses prephenate + S-adenosyl-L-methionine = carboxy-S-adenosyl-L-methionine + 3-phenylpyruvate + H2O. In terms of biological role, catalyzes the conversion of S-adenosyl-L-methionine (SAM) to carboxy-S-adenosyl-L-methionine (Cx-SAM). This is Carboxy-S-adenosyl-L-methionine synthase from Psychrobacter arcticus (strain DSM 17307 / VKM B-2377 / 273-4).